A 1911-amino-acid polypeptide reads, in one-letter code: Adenylate kinase 9 (1911 aa).

An adenylate kinase 1 region spans residues 31–285; it reads VCFVVFGKPG…LFMIVMDRLK (255 aa). 40-45 serves as a coordination point for ATP; sequence GVGKTT. Positions 60–89 are NMP 1; sequence EALPILEEQIAAETESGVMLQSMLISGQSI. Residues 87–89 and 116–119 each bind AMP; these read QSI and EIPS. The LID 1 stretch occupies residues 160–205; it reads GQRQHNNTGYIYSRDQWDPEVIENHRKKKKEAQKDGKGEEEEEEEE. Positions 185–210 are disordered; sequence RKKKKEAQKDGKGEEEEEEEEQEEEE. Over residues 197 to 210 the composition is skewed to acidic residues; that stretch reads GEEEEEEEEQEEEE. Arg229 contributes to the AMP binding site. 2 coiled-coil regions span residues 443-485 and 676-711; these read AEAT…EFGV and LQKK…TEEE. Disordered stretches follow at residues 728-796 and 892-926; these read KAKE…TEIP and DYEE…KERK. Acidic residues predominate over residues 733 to 750; the sequence is EETDNEDEEEIEGDELEV. The segment covering 751 to 761 has biased composition (basic and acidic residues); that stretch reads HEEPEASHDTR. 2 stretches are compositionally biased toward acidic residues: residues 767–791 and 892–919; these read EEFE…ETTV and DYEE…EEGE. Adenylate kinase regions lie at residues 992-1203 and 1412-1601; these read LRIC…ELIL and IRII…KNVQ. An ATP-binding site is contributed by 1001–1006; that stretch reads GSGKTM. The tract at residues 1021–1052 is NMP 2; sequence QFEEVLQEKLLLKTEKKVGPEFEEDSENEQAA. AMP contacts are provided by residues 1050-1052 and 1079-1082; these read QAA and VQLT. Positions 1124 to 1144 are LID 2; that stretch reads DGFPRYPEEAQFLGDRGFFPD. Residue 1421-1426 coordinates ATP; the sequence is KSGKTT. An NMP 3 region spans residues 1441-1472; that stretch reads SIGGALRYVLNNHPETELALMLNWHLHKGMTA. Residues Arg1447, 1470-1472, 1499-1502, Gln1506, and Arg1543 each bind AMP; these read MTA and GYPV. The tract at residues 1536 to 1550 is LID 3; that stretch reads LEKENEQRLPYPLHN.

Belongs to the adenylate kinase family.

It localises to the cytoplasm. The protein localises to the nucleus. It is found in the cell projection. The protein resides in the cilium. Its subcellular location is the flagellum. The enzyme catalyses a ribonucleoside 5'-phosphate + ATP = a ribonucleoside 5'-diphosphate + ADP. It carries out the reaction AMP + ATP = 2 ADP. It catalyses the reaction GTP + AMP = GDP + ADP. The catalysed reaction is CMP + ATP = CDP + ADP. The enzyme catalyses GTP + CMP = CDP + GDP. It carries out the reaction dAMP + ATP = dADP + ADP. It catalyses the reaction dCMP + ATP = dCDP + ADP. The catalysed reaction is a ribonucleoside 5'-diphosphate + ATP = a ribonucleoside 5'-triphosphate + ADP. The enzyme catalyses CDP + ATP = CTP + ADP. It carries out the reaction CDP + GTP = CTP + GDP. It catalyses the reaction GDP + ATP = GTP + ADP. The catalysed reaction is UDP + ATP = UTP + ADP. The enzyme catalyses GTP + UDP = UTP + GDP. It carries out the reaction dTDP + GTP = dTTP + GDP. It catalyses the reaction dCDP + ATP = dCTP + ADP. The catalysed reaction is dCDP + GTP = dCTP + GDP. The enzyme catalyses dGDP + ATP = dGTP + ADP. It carries out the reaction dTDP + ATP = dTTP + ADP. It catalyses the reaction dADP + GTP = dATP + GDP. Its function is as follows. Broad-specificity nucleoside phosphate kinase involved in cellular nucleotide homeostasis by catalyzing nucleoside-phosphate interconversions. Similar to other adenylate kinases, preferentially catalyzes the phosphorylation of the nucleoside monophosphate AMP with ATP as phosphate donor to produce ADP. In vitro, can also catalyze the phosphorylation of CMP, dAMP and dCMP and use GTP as an alternate phosphate donor. Moreover, exhibits a diphosphate kinase activity, producing ATP, CTP, GTP, UTP, TTP, dATP, dCTP and dGTP from the corresponding diphosphate substrates with either ATP or GTP as phosphate donors. For this activity shows the following substrate preference CDP &gt; UDP &gt; ADP &gt; TDP. In Homo sapiens (Human), this protein is Adenylate kinase 9.